The chain runs to 356 residues: A-type ATP synthase subunit C (356 aa).

The protein belongs to the V-ATPase V0D/AC39 subunit family. Has multiple subunits with at least A(3), B(3), C, D, E, F, H, I and proteolipid K(x).

The protein resides in the cell membrane. Functionally, component of the A-type ATP synthase that produces ATP from ADP in the presence of a proton gradient across the membrane. The polypeptide is A-type ATP synthase subunit C (Thermoplasma acidophilum (strain ATCC 25905 / DSM 1728 / JCM 9062 / NBRC 15155 / AMRC-C165)).